We begin with the raw amino-acid sequence, 190 residues long: RING finger protein 227 (190 aa).

The RING-type zinc-finger motif lies at 18-81; the sequence is CNICFRPYNL…RRAVTCPFCR (64 aa). Residues 108–147 are disordered; it reads ARAEREGDPMGSPAKDSGEDGEDDDGEAESEKGAGPPSAG. Residues 126–135 are compositionally biased toward acidic residues; it reads EDGEDDDGEA.

The protein is RING finger protein 227 of Mus musculus (Mouse).